A 784-amino-acid chain; its full sequence is Toll-like receptor 2 (784 aa).

Positions 1–20 are cleaved as a signal peptide; the sequence is MPRALWTAWVWAVIILSTEG. At 21–587 the chain is on the extracellular side; it reads ASDQASSLSC…ARLSLSECHR (567 aa). An intrachain disulfide couples C30 to C36. LRR repeat units lie at residues 54–77, 78–101, 102–125, 126–150, 151–175, 176–199, 200–223, 224–250, 251–278, 279–308, 309–337, 338–361, 362–388, 389–414, 415–437, 438–457, 458–478, 479–500, and 501–524; these read VKSLDLSNNDITYVGNRDLQRCVN, LKTLRLGANEIHTVEEDSFFHLRN, LEYLDLSYNRLSNLSSSWFRSLYV, LKFLNLLGNLYKTLGETSLFSHLPN, LRTLKVGNSNSFTEIHEKDFTGLTF, LEELEISAQNLQIYVPKSLKSIQN, ISHLILHLKQPILLVDILVDIVSS, LDCFELRDTNLHTFHFSEASISEMSTS, VKKLIFRNVQFTDESFVEVVKLFNYVSG, ILEVEFDDCTHDGIGDFRALSLDRIRHLGN, VETLTIRKLHIPQFFLFHDLSSIYPLTGR, VKRVTIENSKVFLVPCLLSQHLKS, LEYLDLSENLMSEETLKNSACKDAWPF, LQTLVLRQNRLKSLEKTGELLLTLEN, LNNLDISKNNFLSMPETCQWPGK, MKQLNLSSTRIHSLTQCLPQ, TLEILDVSNNNLDSFSLILPQ, LKELYISRNKLKTLPDASFLPV, and LSVMRISRNIINTFSKEQLDSFQQ. A glycan (N-linked (GlcNAc...) asparagine) is linked at N114. N199 carries an N-linked (GlcNAc...) asparagine glycan. C353 and C382 form a disulfide bridge. Residues C432 and C454 are joined by a disulfide bond. N442 is a glycosylation site (N-linked (GlcNAc...) asparagine). The LRRCT domain maps to 525–579; that stretch reads LKTLEAGGNNFICSCDFLSFTQGQQALGRVLVDWPDDYRCDSPSHVRGQRVQDAR. A helical transmembrane segment spans residues 588 to 608; the sequence is AAVVSAACCALFLLLLLTGVL. The Cytoplasmic portion of the chain corresponds to 609–784; that stretch reads CHRFHGLWYM…WLNLRAAIRS (176 aa). The TIR domain maps to 639–782; sequence ICYDAFVSYS…GFWLNLRAAI (144 aa). Residue K754 forms a Glycyl lysine isopeptide (Lys-Gly) (interchain with G-Cter in ubiquitin) linkage. The ATG16L1-binding motif motif lies at 761 to 778; sequence YLEWPVDETQQEGFWLNL.

The protein belongs to the Toll-like receptor family. In terms of assembly, interacts with LY96, TLR1 and TLR6 (via extracellular domain). TLR2 seems to exist in heterodimers with either TLR1 or TLR6 before stimulation by the ligand. The heterodimers form bigger oligomers in response to their corresponding ligands as well as further heterotypic associations with other receptors such as CD14 and/or CD36. Binds MYD88 (via TIR domain). Interacts with TICAM1. Interacts with CNPY3. Interacts with ATG16L1. Interacts with PPP1R11. Interacts with TICAM2. Interacts with TIRAP. Ubiquitinated at Lys-754 by PPP1R11, leading to its degradation. Deubiquitinated by USP2. In terms of processing, glycosylation of Asn-442 is critical for secretion of the N-terminal ectodomain of TLR2.

The protein localises to the membrane. The protein resides in the cytoplasmic vesicle. Its subcellular location is the phagosome membrane. It localises to the membrane raft. Functionally, cooperates with LY96 to mediate the innate immune response to bacterial lipoproteins and other microbial cell wall components. Cooperates with TLR1 or TLR6 to mediate the innate immune response to bacterial lipoproteins or lipopeptides. Acts via MYD88 and TRAF6, leading to NF-kappa-B activation, cytokine secretion and the inflammatory response. May also promote apoptosis in response to lipoproteins. Forms activation clusters composed of several receptors depending on the ligand, these clusters trigger signaling from the cell surface and subsequently are targeted to the Golgi in a lipid-raft dependent pathway. Forms the cluster TLR2:TLR6:CD14:CD36 in response to diacylated lipopeptides and TLR2:TLR1:CD14 in response to triacylated lipopeptides. This chain is Toll-like receptor 2 (TLR2), found in Bos taurus (Bovine).